The primary structure comprises 390 residues: 5-hydroxytryptamine receptor 1B (390 aa).

The Extracellular segment spans residues 1-46 (MEEPGAQCAPPXPAGSETWVPQANLSSAPSQNCSAKDYIYQDSIAL). N-linked (GlcNAc...) asparagine glycosylation is found at N24 and N32. A helical membrane pass occupies residues 47–72 (PWKVLLVMLLALITLATTLSNAFVIA). The Cytoplasmic segment spans residues 73–86 (TVYRTRKLHTPANY). The helical transmembrane segment at 87–111 (LIASLAVTDLLVSILVMPISTMYTV) threads the bilayer. Topologically, residues 112-119 (TGRWTLGQ) are extracellular. The chain crosses the membrane as a helical span at residues 120–145 (VVCDFWLSSDITCCTASILHLCVIAL). A disulfide bridge connects residues C122 and C199. 2 residues coordinate ergotamine: D129 and T134. The short motif at 146–148 (DRY) is the DRY motif; important for ligand-induced conformation changes and signaling element. Over 146 to 165 (DRYWAITDAVEYSAKRTPKR) the chain is Cytoplasmic. The chain crosses the membrane as a helical span at residues 166–184 (AAVMIALVWVFSISISLPP). Topologically, residues 185–205 (FFWRQAKAEEEVSECVVNTDH) are extracellular. V201 contacts ergotamine. Residues 206–229 (ILYTVYSTVGAFYFPTLLLIALYG) traverse the membrane as a helical segment. At 230 to 315 (RIYVEARSRI…AARERKATKT (86 aa)) the chain is on the cytoplasmic side. Polar residues predominate over residues 259-272 (DSPGSTSSVTSINS). The tract at residues 259–281 (DSPGSTSSVTSINSRVPDVPSES) is disordered. The helical transmembrane segment at 316 to 337 (LGIILGAFIVCWLPFFIISLVM) threads the bilayer. Residues 338 to 347 (PICKDACWFH) are Extracellular-facing. Residues 348 to 370 (LAIFDFFTWLGYLNSLINPIIYT) traverse the membrane as a helical segment. The NPxxY motif; important for ligand-induced conformation changes and signaling motif lies at 365-369 (NPIIY). The Cytoplasmic segment spans residues 371–390 (MSNEDFKQAFHKLIRFKCTS). C388 carries the S-palmitoyl cysteine lipid modification.

Belongs to the G-protein coupled receptor 1 family. Homodimer. Heterodimer with HTR1D. Phosphorylated. Desensitization of the receptor may be mediated by its phosphorylation. Post-translationally, palmitoylated.

It localises to the cell membrane. G-protein coupled receptor for 5-hydroxytryptamine (serotonin). Also functions as a receptor for ergot alkaloid derivatives, various anxiolytic and antidepressant drugs and other psychoactive substances, such as lysergic acid diethylamide (LSD). Ligand binding causes a conformation change that triggers signaling via guanine nucleotide-binding proteins (G proteins) and modulates the activity of downstream effectors, such as adenylate cyclase. HTR1B is coupled to G(i)/G(o) G alpha proteins and mediates inhibitory neurotransmission by inhibiting adenylate cyclase activity. Arrestin family members inhibit signaling via G proteins and mediate activation of alternative signaling pathways. Regulates the release of 5-hydroxytryptamine, dopamine and acetylcholine in the brain, and thereby affects neural activity, nociceptive processing, pain perception, mood and behavior. Besides, plays a role in vasoconstriction of cerebral arteries. The sequence is that of 5-hydroxytryptamine receptor 1B (HTR1B) from Gorilla gorilla gorilla (Western lowland gorilla).